The primary structure comprises 334 residues: Fructose-1,6-bisphosphatase class 1 (334 aa).

Glutamate 93, aspartate 117, leucine 119, and aspartate 120 together coordinate Mg(2+). Residues 120-123, asparagine 213, tyrosine 244, and lysine 274 contribute to the substrate site; that span reads DGSS. Position 280 (glutamate 280) interacts with Mg(2+).

This sequence belongs to the FBPase class 1 family. As to quaternary structure, homotetramer. Requires Mg(2+) as cofactor.

It localises to the cytoplasm. The catalysed reaction is beta-D-fructose 1,6-bisphosphate + H2O = beta-D-fructose 6-phosphate + phosphate. It participates in carbohydrate biosynthesis; gluconeogenesis. In Flavobacterium johnsoniae (strain ATCC 17061 / DSM 2064 / JCM 8514 / BCRC 14874 / CCUG 350202 / NBRC 14942 / NCIMB 11054 / UW101) (Cytophaga johnsonae), this protein is Fructose-1,6-bisphosphatase class 1.